Here is an 822-residue protein sequence, read N- to C-terminus: Nucleolar complex protein 3 (822 aa).

Disordered stretches follow at residues 1–86 (MGTK…DGDD), 106–142 (ANKR…KEQD), and 172–199 (KPKQ…EDSD). A compositionally biased stretch (basic residues) spans 13-23 (RAAHLKSKKTP). A compositionally biased stretch (basic and acidic residues) spans 35-45 (KRDQLKSKREQ). The Nuclear localization signal motif lies at 41-48 (SKREQGQN). The span at 76–86 (PLEEDNEDGDD) shows a compositional bias: acidic residues. Over residues 116 to 126 (TGENDPDQGQS) the composition is skewed to polar residues. Residues 181–199 (EEEEDDSEEDGDTEYEDSD) are compositionally biased toward acidic residues. At S187 the chain carries Phosphoserine. T193 bears the Phosphothreonine mark. At S198 the chain carries Phosphoserine. The stretch at 445 to 509 (KIKNVNLDAE…NKQAKHQKLT (65 aa)) forms a coiled coil.

It belongs to the CBF/MAK21 family.

Its subcellular location is the nucleus. It is found in the nucleolus. In Drosophila melanogaster (Fruit fly), this protein is Nucleolar complex protein 3.